We begin with the raw amino-acid sequence, 209 residues long: Large ribosomal subunit protein uL4 (209 aa).

The interval 46 to 71 (GTSSTKTRSEVRGSSKKPWKQKGTGR) is disordered. The segment covering 59 to 71 (SSKKPWKQKGTGR) has biased composition (basic residues).

This sequence belongs to the universal ribosomal protein uL4 family. In terms of assembly, part of the 50S ribosomal subunit.

Functionally, one of the primary rRNA binding proteins, this protein initially binds near the 5'-end of the 23S rRNA. It is important during the early stages of 50S assembly. It makes multiple contacts with different domains of the 23S rRNA in the assembled 50S subunit and ribosome. Its function is as follows. Forms part of the polypeptide exit tunnel. This Borreliella afzelii (strain PKo) (Borrelia afzelii) protein is Large ribosomal subunit protein uL4.